A 382-amino-acid chain; its full sequence is Sulfate adenylyltransferase (382 aa).

This sequence belongs to the sulfate adenylyltransferase family.

The catalysed reaction is sulfate + ATP + H(+) = adenosine 5'-phosphosulfate + diphosphate. Its pathway is sulfur metabolism; hydrogen sulfide biosynthesis; sulfite from sulfate: step 1/3. In Staphylothermus marinus (strain ATCC 43588 / DSM 3639 / JCM 9404 / F1), this protein is Sulfate adenylyltransferase.